A 3999-amino-acid chain; its full sequence is Hybrid PKS-NRPS synthetase xenE (3999 aa).

In terms of domain architecture, Ketosynthase family 3 (KS3) spans 13–449 (REPIAVVGSG…GTNAHCIIEN (437 aa)). Catalysis depends on for beta-ketoacyl synthase activity residues cysteine 186, histidine 325, and histidine 369. Residues 562-879 (VFTGQGAQWP…TGLLNRGKDD (318 aa)) enclose the Malonyl-CoA:ACP transacylase (MAT) domain. Positions 949 to 1084 (NPLLGSRTTD…GRVIVITGET (136 aa)) are N-terminal hotdog fold. In terms of domain architecture, PKS/mFAS DH spans 949-1253 (NPLLGSRTTD…VVAFAEQTED (305 aa)). Residues 950–1252 (PLLGSRTTDV…RVVAFAEQTE (303 aa)) are dehydratase (DH) domain. Histidine 981 functions as the Proton acceptor; for dehydratase activity in the catalytic mechanism. Residues 1099 to 1253 (LVDIPEDRFY…VVAFAEQTED (155 aa)) form a C-terminal hotdog fold region. The Proton donor; for dehydratase activity role is filled by aspartate 1159. Residues 1298–1593 (YMKQLVTLFP…FSGADSPMPE (296 aa)) form a methyltransferase (cMeT) domain region. Residues 2133–2306 (TYVLFGLTSD…AASILHLGAV (174 aa)) enclose the Ketoreductase (KR) domain. Residues 2414-2495 (EEILEIVQDA…QLVEYAIGSM (82 aa)) form the Carrier 1 domain. O-(pantetheine 4'-phosphoryl)serine is present on serine 2455. The segment at 2501–2573 (PNRADSAKAS…EESPSESVND (73 aa)) is disordered. The segment covering 2526–2554 (SVSSSPSSLPKTSASGSSQQMSEGSSKTS) has biased composition (low complexity). The segment at 2580-3015 (EKVLPVSPGQ…EEVSLFTEQE (436 aa)) is condensation. The segment at 3045 to 3453 (AVHTDKVALK…RIEGDTQIKL (409 aa)) is adenylation. The Carrier 2 domain occupies 3562–3642 (RKLTDTESKL…AMAAAIQDTS (81 aa)). O-(pantetheine 4'-phosphoryl)serine is present on serine 3602. A reductase-like (R) domain (R) region spans residues 3681–3900 (LTGATGFLGK…IDLITVEKAA (220 aa)).

The protein in the C-terminal section; belongs to the NRP synthetase family.

It participates in mycotoxin biosynthesis. In terms of biological role, hybrid PKS-NRPS synthetase; part of the gene cluster that mediates the biosynthesis of xenoacremones such as xenoacremone A, a compound that shows inhibitory activity toward the PI3K/AKT signaling pathway and which has the ability to induce apoptosis of A549 lung cancer cells. Within the pathway, cooperation of the hybrid PKS-NRPS xenE and the trans-acting enoyl reductase xenG is responsible for the formation of the reduced tyrosine-nonaketide derivative. The PKS module of xenE acted in combination with the trans-acting enoyl reductase xenG to produce a double-methylated nonaketide attached to the ACP domain. In parallel, the adenylation (A) domain of the NRPS module activated L-tyrosine, which was then transferred to the ACP domain. The condensation (C) domain subsequently linked this group to the polyketide chain, forming an enzyme-bound amide. Reductive release by the C-terminal R domain afforded the aldehyde derivative. The alpha/beta hydrolase xenA then accelerates intramolecular nucleophilic attack to give a pyrrolidone derivative. Subsequently, three enzymes, xenF, xenD, and xenC, coordinately participate in the conversion to xenoacremone B. XenF catalyzes sigmatropic rearrangement to form an A-ring, which leads to an unusual intermediate with a hexane ring, which is required for the formation of the tricarbocyclic product. Epoxidation catalyzed by xenD and the formation of the paracyclophane ether catalyzed by xenC initiate a spontaneous intramolecular Diels-Alder (IMDA) reaction to yield xenoacremone B. Spontaneous hydration of xenoacremone B leads to the formation of xenoacremone A, which undergoes subsequent methylation to afford xenoacremone C. In Xenoacremonium sinensis (Endophyte fungus), this protein is Hybrid PKS-NRPS synthetase xenE.